A 1180-amino-acid polypeptide reads, in one-letter code: Nonsense-mediated mRNA decay factor SMG7 (1180 aa).

TPR repeat units follow at residues 151–184 (QHCL…VPSN) and 186–218 (QPYN…KFPF). Disordered regions lie at residues 496-636 (PQEK…TQTT), 692-795 (QTAS…SYMQ), 893-913 (CSDQ…SSPL), 1019-1127 (SLFE…WAAQ), and 1148-1180 (SSMM…NPPH). Over residues 504 to 520 (LQESSNGEQTPNESTHG) the composition is skewed to polar residues. Composition is skewed to basic and acidic residues over residues 547-559 (ENIK…REQN), 584-606 (NEQK…KTTD), and 615-627 (TELR…EARK). The span at 692 to 718 (QTASHPQSANPVQTGKPSHIPYSQQRP) shows a compositional bias: polar residues. Pro residues predominate over residues 728-740 (PPQPQQTQPPPPQ). Residues 741 to 778 (TSQQALQQSVQLQLQQQQQQQQQQQQQQQQSPTKQSSQ) show a composition bias toward low complexity. The span at 1026–1038 (WSPSLPASSDHST) shows a compositional bias: polar residues. The segment covering 1039 to 1065 (PASQSPHSSNPSSLPSSPPTHSHGSMP) has biased composition (low complexity). Basic and acidic residues predominate over residues 1076 to 1090 (DSRDRRANDRWKAEK). The segment covering 1103-1125 (SASTSSVPETNSWHQGAPTSTWA) has biased composition (polar residues).

The protein localises to the cytoplasm. Its subcellular location is the nucleus. In terms of biological role, plays a role in nonsense-mediated mRNA decay. Recruits UPF1 to cytoplasmic mRNA decay bodies. Together with SMG5 is thought to provide a link to the mRNA degradation machinery involving exonucleolytic pathways, and to serve as an adapter for UPF1 to protein phosphatase 2A (PP2A), thereby triggering UPF1 dephosphorylation. Required for normal embryonic development. This is Nonsense-mediated mRNA decay factor SMG7 from Danio rerio (Zebrafish).